A 425-amino-acid chain; its full sequence is Serine hydroxymethyltransferase (425 aa).

(6S)-5,6,7,8-tetrahydrofolate contacts are provided by residues leucine 128 and 132–134 (GHL). Position 237 is an N6-(pyridoxal phosphate)lysine (lysine 237).

The protein belongs to the SHMT family. In terms of assembly, homodimer. It depends on pyridoxal 5'-phosphate as a cofactor.

It localises to the cytoplasm. It carries out the reaction (6R)-5,10-methylene-5,6,7,8-tetrahydrofolate + glycine + H2O = (6S)-5,6,7,8-tetrahydrofolate + L-serine. It participates in one-carbon metabolism; tetrahydrofolate interconversion. The protein operates within amino-acid biosynthesis; glycine biosynthesis; glycine from L-serine: step 1/1. In terms of biological role, catalyzes the reversible interconversion of serine and glycine with tetrahydrofolate (THF) serving as the one-carbon carrier. This reaction serves as the major source of one-carbon groups required for the biosynthesis of purines, thymidylate, methionine, and other important biomolecules. Also exhibits THF-independent aldolase activity toward beta-hydroxyamino acids, producing glycine and aldehydes, via a retro-aldol mechanism. This is Serine hydroxymethyltransferase from Wolbachia sp. subsp. Drosophila simulans (strain wRi).